Here is a 333-residue protein sequence, read N- to C-terminus: MKTIFFGTPEVAVPYLEILNRYTEVVLVVTQPDRPRGRGMVITPCPVKETALKMGLKVLSPEKITDIEADLKAAGADYGIAVAYGQILKQHIIDIPKLGIVNIHFSLLPKFRGAAPVQHTLFAGETKTGVTAFWIDKGMDTGPVFAYKETDILPSEDAKTLFTKLISLGGILLEDVIEYIRLGQIVKIPQTKNIFTPQEDGSMFKEELPLPTYAPMIKKEDTILDFNNFGAETFFNRVRGLACGPHAKVITKINGKEDLLQIIKASLLEKNKQCPPNMPRGSVVSIENDGRILVKCYDSCIYIDIVRPAGKKDMTAASFANGHKIKPGDVIFY.

106-109 (SLLP) lines the (6S)-5,6,7,8-tetrahydrofolate pocket.

This sequence belongs to the Fmt family.

It carries out the reaction L-methionyl-tRNA(fMet) + (6R)-10-formyltetrahydrofolate = N-formyl-L-methionyl-tRNA(fMet) + (6S)-5,6,7,8-tetrahydrofolate + H(+). Its function is as follows. Attaches a formyl group to the free amino group of methionyl-tRNA(fMet). The formyl group appears to play a dual role in the initiator identity of N-formylmethionyl-tRNA by promoting its recognition by IF2 and preventing the misappropriation of this tRNA by the elongation apparatus. The chain is Methionyl-tRNA formyltransferase from Elusimicrobium minutum (strain Pei191).